Consider the following 530-residue polypeptide: Methionine--tRNA ligase (530 aa).

The 'HIGH' region signature appears at 18-28; the sequence is YYVNDVPHIGS. The Zn(2+) site is built by Cys133, Cys136, Cys151, and His154. The short motif at 307–311 is the 'KMSKS' region element; that stretch reads KMGKS. ATP is bound at residue Lys310.

It belongs to the class-I aminoacyl-tRNA synthetase family. MetG type 2A subfamily. In terms of assembly, monomer. Requires Zn(2+) as cofactor.

Its subcellular location is the cytoplasm. It catalyses the reaction tRNA(Met) + L-methionine + ATP = L-methionyl-tRNA(Met) + AMP + diphosphate. In terms of biological role, is required not only for elongation of protein synthesis but also for the initiation of all mRNA translation through initiator tRNA(fMet) aminoacylation. In Nostoc sp. (strain PCC 7120 / SAG 25.82 / UTEX 2576), this protein is Methionine--tRNA ligase.